The primary structure comprises 388 residues: ATP phosphoribosyltransferase regulatory subunit (388 aa).

The protein belongs to the class-II aminoacyl-tRNA synthetase family. HisZ subfamily. Heteromultimer composed of HisG and HisZ subunits.

Its subcellular location is the cytoplasm. Its pathway is amino-acid biosynthesis; L-histidine biosynthesis; L-histidine from 5-phospho-alpha-D-ribose 1-diphosphate: step 1/9. In terms of biological role, required for the first step of histidine biosynthesis. May allow the feedback regulation of ATP phosphoribosyltransferase activity by histidine. The sequence is that of ATP phosphoribosyltransferase regulatory subunit from Acinetobacter baumannii (strain AB307-0294).